Reading from the N-terminus, the 246-residue chain is Uridylate kinase (246 aa).

Position 20 to 23 (20 to 23) interacts with ATP; the sequence is KISG. An involved in allosteric activation by GTP region spans residues 28–33; it reads GDQGYG. Glycine 62 contributes to the UMP binding site. 2 residues coordinate ATP: glycine 63 and arginine 67. UMP contacts are provided by residues aspartate 82 and 143–150; that span reads TGNPYFTT. 3 residues coordinate ATP: threonine 170, tyrosine 176, and aspartate 179.

The protein belongs to the UMP kinase family. In terms of assembly, homohexamer.

It localises to the cytoplasm. The enzyme catalyses UMP + ATP = UDP + ADP. The protein operates within pyrimidine metabolism; CTP biosynthesis via de novo pathway; UDP from UMP (UMPK route): step 1/1. With respect to regulation, allosterically activated by GTP. Inhibited by UTP. Its function is as follows. Catalyzes the reversible phosphorylation of UMP to UDP. The sequence is that of Uridylate kinase from Cereibacter sphaeroides (strain ATCC 17029 / ATH 2.4.9) (Rhodobacter sphaeroides).